A 138-amino-acid chain; its full sequence is MRSSTILFVLGVAMVAVNGVTTALISDGTGKGTQGKHRLLRSNSGKHKTDEERLKLSARIYGTKAYKKRQVRNRESARKFQKALLNMADGNDIARLLKKRNTTLKGLFALLARNKAGLPKEAKNHITTVYNTRRGGVL.

The N-terminal stretch at 1 to 19 is a signal peptide; that stretch reads MRSSTILFVLGVAMVAVNG. Positions 38 to 53 match the RxLR-dEER motif; sequence RLLRSNSGKHKTDEER. N-linked (GlcNAc...) asparagine glycosylation is present at Asn-101.

This sequence belongs to the RxLR effector family.

Its subcellular location is the secreted. The protein resides in the host nucleus. Its function is as follows. Secreted effector that completely suppresses the host cell death induced by cell death-inducing proteins. This is Secreted RxLR effector protein 51 from Plasmopara viticola (Downy mildew of grapevine).